A 169-amino-acid polypeptide reads, in one-letter code: Peptide deformylase (169 aa).

Fe cation-binding residues include C91 and H133. E134 is an active-site residue. Fe cation is bound at residue H137.

It belongs to the polypeptide deformylase family. It depends on Fe(2+) as a cofactor.

It carries out the reaction N-terminal N-formyl-L-methionyl-[peptide] + H2O = N-terminal L-methionyl-[peptide] + formate. Its function is as follows. Removes the formyl group from the N-terminal Met of newly synthesized proteins. Requires at least a dipeptide for an efficient rate of reaction. N-terminal L-methionine is a prerequisite for activity but the enzyme has broad specificity at other positions. The polypeptide is Peptide deformylase (Klebsiella pneumoniae (strain 342)).